The sequence spans 200 residues: Protein GrpE (200 aa).

Residues 1 to 11 are compositionally biased toward polar residues; sequence MSNQTNKAQDN. The tract at residues 1-25 is disordered; that stretch reads MSNQTNKAQDNQVEEIVEGELLNEN.

The protein belongs to the GrpE family. Homodimer.

It localises to the cytoplasm. Participates actively in the response to hyperosmotic and heat shock by preventing the aggregation of stress-denatured proteins, in association with DnaK and GrpE. It is the nucleotide exchange factor for DnaK and may function as a thermosensor. Unfolded proteins bind initially to DnaJ; upon interaction with the DnaJ-bound protein, DnaK hydrolyzes its bound ATP, resulting in the formation of a stable complex. GrpE releases ADP from DnaK; ATP binding to DnaK triggers the release of the substrate protein, thus completing the reaction cycle. Several rounds of ATP-dependent interactions between DnaJ, DnaK and GrpE are required for fully efficient folding. This is Protein GrpE from Shewanella pealeana (strain ATCC 700345 / ANG-SQ1).